Here is a 120-residue protein sequence, read N- to C-terminus: NADH dehydrogenase [ubiquinone] 1 subunit C2 (120 aa).

A helical transmembrane segment spans residues 57 to 76 (GLHRQLLFVTSFVFAGYFYL).

It belongs to the complex I NDUFC2 subunit family. Complex I is composed of 45 different subunits. Interacts with TMEM242.

It is found in the mitochondrion inner membrane. Accessory subunit of the mitochondrial membrane respiratory chain NADH dehydrogenase (Complex I), that is believed not to be involved in catalysis but required for the complex assembly. Complex I functions in the transfer of electrons from NADH to the respiratory chain. The immediate electron acceptor for the enzyme is believed to be ubiquinone. The protein is NADH dehydrogenase [ubiquinone] 1 subunit C2 of Mus musculus (Mouse).